The chain runs to 548 residues: tRNA (guanine(26)-N(2))-dimethyltransferase (548 aa).

Residues 30–470 enclose the Trm1 methyltransferase domain; the sequence is ASLTEGSAII…APWSFVWDVL (441 aa). S-adenosyl-L-methionine is bound by residues R57, R137, D155, and A186. Zn(2+) contacts are provided by C317, C320, C354, and C357. Positions 523-548 are disordered; that stretch reads QMNPTENWGPKSKPGKRTIAEVDSKS.

The protein belongs to the class I-like SAM-binding methyltransferase superfamily. Trm1 family.

It is found in the mitochondrion. Its subcellular location is the nucleus. It localises to the cytoplasm. It carries out the reaction guanosine(26) in tRNA + 2 S-adenosyl-L-methionine = N(2)-dimethylguanosine(26) in tRNA + 2 S-adenosyl-L-homocysteine + 2 H(+). Its function is as follows. Dimethylates a single guanine residue at position 26 of nuclear- and mitochondrial-encoded tRNAs using S-adenosyl-L-methionine as donor of the methyl groups. Also has tRNA strand annealing and dissociation activity independently of its tRNA guanine-dimethyltransferase activity. In Schizosaccharomyces pombe (strain 972 / ATCC 24843) (Fission yeast), this protein is tRNA (guanine(26)-N(2))-dimethyltransferase.